The following is a 450-amino-acid chain: Beta-glucosidase (450 aa).

The active-site Proton donor is Glu-166. The active-site Nucleophile is Glu-355.

Belongs to the glycosyl hydrolase 1 family.

It carries out the reaction Hydrolysis of terminal, non-reducing beta-D-glucosyl residues with release of beta-D-glucose.. This Niallia circulans (Bacillus circulans) protein is Beta-glucosidase (bglA).